The chain runs to 438 residues: DNA primase DnaG (438 aa).

Residues 169 to 243 (DSIIVVEGRA…DIDYVARAPY (75 aa)) form the Toprim domain. 3 residues coordinate Mg(2+): Glu175, Asp217, and Asp219.

This sequence belongs to the archaeal DnaG primase family. In terms of assembly, forms a ternary complex with MCM helicase and DNA. Requires Mg(2+) as cofactor.

It catalyses the reaction ssDNA + n NTP = ssDNA/pppN(pN)n-1 hybrid + (n-1) diphosphate.. Its function is as follows. RNA polymerase that catalyzes the synthesis of short RNA molecules used as primers for DNA polymerase during DNA replication. This Methanococcus maripaludis (strain C5 / ATCC BAA-1333) protein is DNA primase DnaG.